The primary structure comprises 153 residues: Lectin-like protein EP153R (153 aa).

Over 1-30 (MYFKKKYIGLIDKNCEKKILDDSSTIKICY) the chain is Cytoplasmic. A helical transmembrane segment spans residues 31–51 (ILIGILIGTNMITLIYNFIFW). At 52–153 (DNYIKCYRNN…YTDLLFICGK (102 aa)) the chain is on the extracellular side. An intrachain disulfide couples cysteine 67 to cysteine 78. Residues asparagine 83, asparagine 89, asparagine 101, asparagine 107, asparagine 113, asparagine 120, asparagine 127, and asparagine 143 are each glycosylated (N-linked (GlcNAc...) asparagine; by host). Cysteine 97 and cysteine 151 are oxidised to a cystine.

This sequence belongs to the asfivirus lectin-like protein family. As to quaternary structure, homodimer.

Its subcellular location is the host endoplasmic reticulum membrane. Its function is as follows. Down-regulates MHC-I expression by impairing the appropriate configuration or presentation into the plasma membrane of the latter. Participates in viral hemadsorption, which may help viral spread. Reduces the transactivating activity of host TP53, thus inhibiting apoptosis. Non-essential for virus growth in swine macrophage cell cultures. The chain is Lectin-like protein EP153R from African swine fever virus (strain Badajoz 1971 Vero-adapted) (Ba71V).